The chain runs to 167 residues: Leptin (167 aa).

The signal sequence occupies residues 1–21; the sequence is MHWGTLCGFLWLWPYLFYVQA. C117 and C167 form a disulfide bridge.

Belongs to the leptin family. As to quaternary structure, interacts with SIGLEC6. In terms of tissue distribution, adipose tissue is the main source of leptin. It is also produced by other peripheral tissues such as the skeletal muscle. Expressed by intercalated and striated tracts of submandibular and parotid salivary gland intralobular ducts. Detected by fundic epithelium of the gastric mucosa. Secreted into blood and gastric juice.

It is found in the secreted. Functionally, key player in the regulation of energy balance and body weight control. Once released into the circulation, has central and peripheral effects by binding LEPR, found in many tissues, which results in the activation of several major signaling pathways. In the hypothalamus, acts as an appetite-regulating factor that induces a decrease in food intake and an increase in energy consumption by inducing anorexinogenic factors and suppressing orexigenic neuropeptides, also regulates bone mass and secretion of hypothalamo-pituitary-adrenal hormones. In the periphery, increases basal metabolism, influences reproductive function, regulates pancreatic beta-cell function and insulin secretion, is pro-angiogenic for endothelial cell and affects innate and adaptive immunity. In the arcuate nucleus of the hypothalamus, activates by depolarization POMC neurons inducing FOS and SOCS3 expression to release anorexigenic peptides and inhibits by hyperpolarization NPY neurons inducing SOCS3 with a consequent reduction on release of orexigenic peptides. In addition to its known satiety inducing effect, has a modulatory role in nutrient absorption. In the intestine, reduces glucose absorption by enterocytes by activating PKC and leading to a sequential activation of p38, PI3K and ERK signaling pathways which exerts an inhibitory effect on glucose absorption. Acts as a growth factor on certain tissues, through the activation of different signaling pathways increases expression of genes involved in cell cycle regulation such as CCND1, via JAK2-STAT3 pathway, or VEGFA, via MAPK1/3 and PI3K-AKT1 pathways. May also play an apoptotic role via JAK2-STAT3 pathway and up-regulation of BIRC5 expression. Pro-angiogenic, has mitogenic activity on vascular endothelial cells and plays a role in matrix remodeling by regulating the expression of matrix metalloproteinases (MMPs) and tissue inhibitors of metalloproteinases (TIMPs). In innate immunity, modulates the activity and function of neutrophils by increasing chemotaxis and the secretion of oxygen radicals. Increases phagocytosis by macrophages and enhances secretion of pro-inflammatory mediators. Increases cytotoxic ability of NK cells. Plays a pro-inflammatory role, in synergy with IL1B, by inducing NOS2 which promotes the production of IL6, IL8 and Prostaglandin E2, through a signaling pathway that involves JAK2, PI3K, MAP2K1/MEK1 and MAPK14/p38. In adaptive immunity, promotes the switch of memory T-cells towards T helper-1 cell immune responses. Increases CD4(+)CD25(-) T-cell proliferation and reduces autophagy during TCR (T-cell receptor) stimulation, through MTOR signaling pathway activation and BCL2 up-regulation. This chain is Leptin, found in Homo sapiens (Human).